The primary structure comprises 678 residues: Secretin ExeD (678 aa).

The first 25 residues, 1–25 (MINKGKSWRLATVAAALMMAGSAWA), serve as a signal peptide directing secretion. Residues 26–122 (TEYSASFKNA…VVDETNPGIG (97 aa)) form an N0 region. The segment at 124 to 188 (EMVTRVVPVR…EVVRRVDKAG (65 aa)) is N1. The tract at residues 189 to 264 (DQEVDIIKLR…MVRQLDRDLQ (76 aa)) is N2. The segment at 267 to 347 (GNTRVFYLKY…ELEQVVAKLD (81 aa)) is N3. The segment at 352–602 (QVLVEAIIVE…VFIRPTILRD (251 aa)) is secretin. Residues 604–678 (HVYSGISSNK…GAQPFVQGNK (75 aa)) form a s domain region.

The protein belongs to the bacterial secretin family. GSP D subfamily. In terms of assembly, forms a cylindrical channel with 15 subunits.

It is found in the cell outer membrane. Functionally, involved in a type II secretion system (T2SS, formerly general secretion pathway, GSP) for the export of proteins. This subunit forms the outer membrane channel. This is Secretin ExeD (exeD) from Aeromonas salmonicida.